The sequence spans 184 residues: Ribosome-recycling factor (184 aa).

This sequence belongs to the RRF family.

The protein localises to the cytoplasm. Its function is as follows. Responsible for the release of ribosomes from messenger RNA at the termination of protein biosynthesis. May increase the efficiency of translation by recycling ribosomes from one round of translation to another. The protein is Ribosome-recycling factor of Bifidobacterium animalis subsp. lactis (strain AD011).